Here is a 666-residue protein sequence, read N- to C-terminus: Spartin (666 aa).

M1 is subject to N-acetylmethionine. In terms of domain architecture, MIT spans 16-94 (IREAYKKAFL…LQNVRTRLEI (79 aa)). Residues 124-156 (EKLPEPQSFSSAPQHAEVNGNTSTPSAGAVAAP) form a disordered region. Low complexity predominate over residues 146 to 156 (STPSAGAVAAP). Positions 190–380 (DSGEFSSVGE…QLDQGNKDVR (191 aa)) are ubiquitin-binding region (UBR) domain. The LC3-interacting region (LIR); mediates interaction with MAP1LC3A AND MAP1LC3C motif lies at 193 to 200 (EFSSVGEE). The disordered stretch occupies residues 344–398 (EENEFQIPGRTRPSSDQLKEASGTDVKQLDQGNKDVRHKGKRGKRAKDTSSEEVN). A Glycyl lysine isopeptide (Lys-Gly) (interchain with G-Cter in ubiquitin) cross-link involves residue K362. The segment covering 379-388 (VRHKGKRGKR) has biased composition (basic residues). One can recognise a Senescence domain in the interval 427-611 (ILSGASWVSW…YNINNIGIKA (185 aa)). A required for localization to lipid droplets region spans residues 431-503 (ASWVSWGLVK…LVDGVCTVAN (73 aa)). S470 is subject to Phosphoserine. Positions 636–666 (RENQEGAANVNVRGEKDEQTKEVKEAKKKDK) are disordered. The span at 648–666 (RGEKDEQTKEVKEAKKKDK) shows a compositional bias: basic and acidic residues.

In terms of assembly, interacts with ITCH and WWP1. Interacts (via MIT domain) with IST1; leading to the recruitment of SPART to midbodies. Interacts with MAP1LC3A and MAP1LC3C. Ubiquitinated; ubiquitination does not require ITCH and WWP1. In terms of tissue distribution, ubiquitously expressed, with highest levels of expression detected in adipose tissue.

It localises to the cytoplasm. It is found in the midbody. The protein localises to the lipid droplet. Its function is as follows. Lipophagy receptor that plays an important role in lipid droplet (LD) turnover in motor neurons. Localizes to LDs and interacts with components of the autophagy machinery, such as MAP1LC3A/C proteins to deliver LDs to autophagosomes for degradation via lipophagy. Lipid transfer protein required for lipid droplet degradation, including by lipophagy. Can bind and transfer all lipid species found in lipid droplets, from phospholipids to triglycerides and sterol esters but the direction of lipid transfer by spartin and its cargos are unknown. May be implicated in endosomal trafficking, or microtubule dynamics, or both. Participates in cytokinesis. The sequence is that of Spartin from Homo sapiens (Human).